Reading from the N-terminus, the 488-residue chain is MESTNLKNAKHETLVMDPISFQSKAQEVSRFSENSNPNFVSHSTPLEKSSKSSAQKNPKWKPNPVPAVFSPRNRIRERRFVVVKKNSRKEKNDSASVDCKCGAKTISNMKKCVCIAYETLRASQEEFFNNRRESVSEIGESSQNLEDGNEQVEFGDSDETRVSLMKRRREKVLEEARMSIPEFGKVMHLVKAFEKLTCFPLSKVTSKEEEDQIKQPLKWELPGMSQPKCSESETDQFTWSSSFYPSSGLILTATNLGLEQPHASVSSSWDNSVSSLNSNGGRRGRRNSFESSASMGSRRSTKKQIKVTSLKPFKLRTEERGRMKEEEFAKKLHEMTLEKAKKRIPIAQGLPWTTDEPENLVKPHVKDITIPVDLKLHSDIRAVERAEFDYQVTEKINLVEQYKTERERQQKLAEEEEIRRLRKELVPKAQPMPYFDRPFIPKRSNKHPTVPRDPKFNIPQHKKIRCCSTSSWSDTGSYMSDLLYQQDL.

Polar residues predominate over residues 25–56 (AQEVSRFSENSNPNFVSHSTPLEKSSKSSAQK). Disordered stretches follow at residues 25–71 (AQEV…VFSP), 262–304 (HASV…TKKQ), and 436–457 (DRPF…PKFN). Over residues 264–280 (SVSSSWDNSVSSLNSNG) the composition is skewed to low complexity.

Belongs to the TPX2 family.

The protein localises to the cytoplasm. The protein resides in the cytoskeleton. Functionally, binds directly to microtubules. Microtubule-destabilizing protein involved in the PIF3-dependent positive regulation of hypocotyl cell elongation via the modulation of cortical microtubules dynamic in response to light and ethylene signaling. Promotes submergence-induced and ethylene-dependent underwater hypocotyl elongation. In Arabidopsis thaliana (Mouse-ear cress), this protein is Microtubule-destabilizing protein 60.